The following is a 788-amino-acid chain: 5-methyltetrahydropteroyltriglutamate--homocysteine methyltransferase (788 aa).

5-methyltetrahydropteroyltri-L-glutamate-binding positions include 24 to 27 (RELK) and K140. L-homocysteine contacts are provided by residues 463–465 (IGS) and E516. L-methionine contacts are provided by residues 463-465 (IGS) and E516. 5-methyltetrahydropteroyltri-L-glutamate is bound by residues 547 to 548 (RC) and W593. D631 contributes to the L-homocysteine binding site. D631 lines the L-methionine pocket. Residue E637 coordinates 5-methyltetrahydropteroyltri-L-glutamate. Zn(2+) contacts are provided by H673, C675, and E697. H726 (proton donor) is an active-site residue. C758 contributes to the Zn(2+) binding site.

The protein belongs to the vitamin-B12 independent methionine synthase family. Zn(2+) is required as a cofactor.

It carries out the reaction 5-methyltetrahydropteroyltri-L-glutamate + L-homocysteine = tetrahydropteroyltri-L-glutamate + L-methionine. Its pathway is amino-acid biosynthesis; L-methionine biosynthesis via de novo pathway; L-methionine from L-homocysteine (MetE route): step 1/1. Its function is as follows. Catalyzes the transfer of a methyl group from 5-methyltetrahydrofolate to homocysteine resulting in methionine formation. The protein is 5-methyltetrahydropteroyltriglutamate--homocysteine methyltransferase of Rhodopseudomonas palustris (strain TIE-1).